A 56-amino-acid chain; its full sequence is Ovomucoid (56 aa).

The region spanning 6 to 56 (VDCSEYPKPDCTTEERPLCGSDNKTYGNKCNFCNAVVESNGTLTLSHFGKC) is the Kazal-like domain. Intrachain disulfides connect cysteine 8–cysteine 38, cysteine 16–cysteine 35, and cysteine 24–cysteine 56. N-linked (GlcNAc...) asparagine glycosylation occurs at asparagine 45.

The protein localises to the secreted. The chain is Ovomucoid from Francolinus pondicerianus (Grey francolin).